A 72-amino-acid chain; its full sequence is Translational regulator CsrA (72 aa).

It belongs to the CsrA/RsmA family. Homodimer; the beta-strands of each monomer intercalate to form a hydrophobic core, while the alpha-helices form wings that extend away from the core.

Its subcellular location is the cytoplasm. In terms of biological role, a translational regulator that binds mRNA to regulate translation initiation and/or mRNA stability. Usually binds in the 5'-UTR at or near the Shine-Dalgarno sequence preventing ribosome-binding, thus repressing translation. Its main target seems to be the major flagellin gene, while its function is anatagonized by FliW. In Clostridium botulinum (strain Loch Maree / Type A3), this protein is Translational regulator CsrA.